A 191-amino-acid polypeptide reads, in one-letter code: Recombination protein RecR (191 aa).

The C4-type zinc finger occupies 56 to 71; sequence CQNCNFLQSNNICHFC. Residues 78-170 enclose the Toprim domain; the sequence is KQLMIFETTS…KVTKLAQGLP (93 aa).

The protein belongs to the RecR family.

Its function is as follows. May play a role in DNA repair. It seems to be involved in an RecBC-independent recombinational process of DNA repair. It may act with RecF and RecO. The polypeptide is Recombination protein RecR (Mycoplasmopsis pulmonis (strain UAB CTIP) (Mycoplasma pulmonis)).